The following is a 594-amino-acid chain: Frizzled and smoothened-like protein A (594 aa).

The first 22 residues, 1–22 (MVDIRKSLFFIIFFIFYNYVNS), serve as a signal peptide directing secretion. Over 23-248 (QKAINSDAFC…NEWYQFKDLT (226 aa)) the chain is Extracellular. An FZ domain is found at 27–173 (NSDAFCQKKT…SNYDLQCLNI (147 aa)). Intrachain disulfides connect cysteine 32–cysteine 98 and cysteine 41–cysteine 91. 2 N-linked (GlcNAc...) asparagine glycosylation sites follow: asparagine 55 and asparagine 106. Cysteines 117 and 170 form a disulfide. Asparagine 182, asparagine 189, asparagine 195, and asparagine 206 each carry an N-linked (GlcNAc...) asparagine glycan. A helical membrane pass occupies residues 249-269 (TVTGVISFVCIFFNIFIYGFL). The Cytoplasmic segment spans residues 270 to 277 (NKKHDRHT). Residues 278-298 (IGILCLSFSLWCCMLSDLIVA) traverse the membrane as a helical segment. Residues 299–329 (SSPDYSLVCPEPGRFARIHDSRCVANGIIFQ) lie on the Extracellular side of the membrane. A helical membrane pass occupies residues 330–350 (WGAVCTTMFWSAMAIDLYLVI). At 351–361 (KKLSLPAFTVK) the chain is on the cytoplasmic side. The helical transmembrane segment at 362 to 382 (YFVAAIFTLALLFTTVPLAWD) threads the bilayer. Over 383-403 (DYGYGFGGVGCWIMSNSVQNG) the chain is Extracellular. The helical transmembrane segment at 404-424 (CFWIPMLICLLIGAVSICLII) threads the bilayer. At 425 to 448 (YEIVKVFKNVGRSGISIILANARL) the chain is on the cytoplasmic side. The chain crosses the membrane as a helical span at residues 449–469 (FGIVSFIFIEYIYLFVYHFWV). The Extracellular portion of the chain corresponds to 470–507 (QENTEKFTQNITDWVICVQTTGSSDGCPLPKAVPYATQ). N-linked (GlcNAc...) asparagine glycosylation occurs at asparagine 479. A helical transmembrane segment spans residues 508–528 (FIFLFFLRLLGIEVCIFYGIN). The Cytoplasmic segment spans residues 529 to 594 (SRSKNIILES…SKNGGDDDDL (66 aa)).

The protein belongs to the G-protein coupled receptor Fz/Smo family.

It localises to the membrane. The protein is Frizzled and smoothened-like protein A (fslA) of Dictyostelium discoideum (Social amoeba).